Here is a 1296-residue protein sequence, read N- to C-terminus: MEILRGSPALSAFRITKLLSRCQDAHLLVSDIYAEYVHFADVSAPLSADEHARLQRLLQYGPSLPEHPPAGRLLLVTPRPGTISPWSSKATDIAHNCGLSQILRLERGLAFSIQGPDLNESQWKQLAALLHDRMMEAVFTDLQQAEQLFSHHQPAPVQRVDILGQGRSALEQANIKLGLALAQDEIDYLLTAFTGLGRNPTDIELYMFAQANSEHCRHKIFNADWVIDGVVQPKTLFKMIKNTFEHTPDYVLSAYKDNAAVMEGSQVGRFYATAEKGIYDYHQEEAHILMKVETHNHPTAISPWPGAATGSGGEIRDEGATGRGAKPKAGLVGFSVSNLRIPGFEQPWEENFGKPDRIVTALDIMTEGPLGGAAFNNEFGRPALLGYFRTYEERVNSHNGIELRGYHKPIMLAGGLGNIRADHVQKGEITVGAKLVVLGGPSMNIGLGGGAASSMASGQSDADLDFASVQRDNPEMERRCQEVIDRCWQLGEYNPILFIHDVGAGGLSNAMPELVNDGGRGGRFELRDILNDEPGMSPLEVWCNESQERYVLAVAPAQMALFDEICRRERAPYAVIGEATEEKHLLLNDRHFGNQPIDMPLDVLLGKTPKMLRDVTRLQAKGDALQRADISLAEAVKRIMHLPAVAEKTFLITIGDRTVTGMVTRDQMVGPWQIPVADCAVTSASLDSYYGEAMSLGERAPVALLDFAASARLAVGEALTNIAATQIGELKRIKLSANWMSAAGHPGEDAGLYDAVRAVGEELCPALEITIPVGKDSMSMKTRWQEGHEQREMTSPLSLVITAFARIEDVRRTVTPQLRTDKGDNALLLIDLGAGHNALGATALTQVYRQLGDKPADVRNVQQLAGFFNAMQRLVADQHLLAYHDRSDGGLLVTLAEMAFAGHCGVTVDIQSLGNDALAALFNEELGAVIQVRAEQRADVEKLLADHGLANCVHYLGRAVAGDTFDIRSGTDVVYSEKRSTLRLWWAETSWQMQRLRDNPDCADQEHQAKQDESDPGLNVKLTFDPAEDIAAPFILKQARPKVAVLREQGVNSHVEMAAAFHRAGFDAVDVHMSDLLAGRTDLQSFQTLVACGGFSYGDVLGAGEGWAKSILFNDRVRDEFEAFFHRPTTLALGVCNGCQMMSNLRELIPGAEHWPRFVRNLSDSFEARFSLVEVASSPSLFMQDMVGSRMPIAVSHGEGQVEVRDAAHLAALEQSHLVALRFVNNHGVVTEQYPANPNGSANGITAVTSVSGRATVMMPHPERVFRTVSNSWHPEEWGEDSPWMRMFRNARKQLG.

Positions tryptophan 304–arginine 323 are disordered. Residues glycine 306–aspartate 317 and alanine 677 contribute to the ATP site. Mg(2+)-binding residues include aspartate 678, glutamate 717, asparagine 721, and aspartate 885. Residue serine 887 coordinates ATP. Residues proline 1000–glutamate 1013 show a composition bias toward basic and acidic residues. Residues proline 1000–asparagine 1019 are disordered. One can recognise a Glutamine amidotransferase type-1 domain in the interval valine 1043–glycine 1296. Cysteine 1136 acts as the Nucleophile in catalysis. Active-site residues include histidine 1261 and glutamate 1263.

It in the N-terminal section; belongs to the FGAMS family. As to quaternary structure, monomer.

Its subcellular location is the cytoplasm. It catalyses the reaction N(2)-formyl-N(1)-(5-phospho-beta-D-ribosyl)glycinamide + L-glutamine + ATP + H2O = 2-formamido-N(1)-(5-O-phospho-beta-D-ribosyl)acetamidine + L-glutamate + ADP + phosphate + H(+). It functions in the pathway purine metabolism; IMP biosynthesis via de novo pathway; 5-amino-1-(5-phospho-D-ribosyl)imidazole from N(2)-formyl-N(1)-(5-phospho-D-ribosyl)glycinamide: step 1/2. Phosphoribosylformylglycinamidine synthase involved in the purines biosynthetic pathway. Catalyzes the ATP-dependent conversion of formylglycinamide ribonucleotide (FGAR) and glutamine to yield formylglycinamidine ribonucleotide (FGAM) and glutamate. The chain is Phosphoribosylformylglycinamidine synthase from Yersinia pestis bv. Antiqua (strain Antiqua).